An 85-amino-acid chain; its full sequence is Large ribosomal subunit protein bL27 (85 aa).

A disordered region spans residues 1–22; sequence MAHKKAGGSTRNGRDSESKRLG.

This sequence belongs to the bacterial ribosomal protein bL27 family.

The polypeptide is Large ribosomal subunit protein bL27 (Vibrio vulnificus (strain CMCP6)).